Here is a 216-residue protein sequence, read N- to C-terminus: Ribonuclease HII (216 aa).

One can recognise an RNase H type-2 domain in the interval 28–216 (ACIAGIDEAG…GVKEYVRSEE (189 aa)). Asp34, Glu35, and Asp126 together coordinate a divalent metal cation.

Belongs to the RNase HII family. Requires Mn(2+) as cofactor. It depends on Mg(2+) as a cofactor.

Its subcellular location is the cytoplasm. It catalyses the reaction Endonucleolytic cleavage to 5'-phosphomonoester.. Endonuclease that specifically degrades the RNA of RNA-DNA hybrids. This Geotalea uraniireducens (strain Rf4) (Geobacter uraniireducens) protein is Ribonuclease HII.